A 334-amino-acid chain; its full sequence is Cysteine and histidine-rich domain-containing protein 1 (334 aa).

Zn(2+) is bound by residues C5, C10, C24, H27, C42, C43, C59, H64, C156, C161, C175, H178, C193, C194, C210, and H215. CHORD domains follow at residues 5–64 and 156–215; these read CYNR…KGQH and CKNG…KGTH. The 90-residue stretch at 226 to 315 folds into the CS domain; that stretch reads VVPCRHDWHQ…AEFMTWARLE (90 aa).

Its function is as follows. Regulates centrosome duplication. This is Cysteine and histidine-rich domain-containing protein 1 (chordc1) from Xenopus laevis (African clawed frog).